We begin with the raw amino-acid sequence, 496 residues long: Solute carrier family 2, facilitated glucose transporter member 11 (496 aa).

The Cytoplasmic segment spans residues 1–11 (MRALRRLIQGR). Residues 12-32 (ILLLTICAAGIGGTFQFGYNL) form a helical membrane-spanning segment. At 33–61 (SIINAPTLHIQEFTNETWQARTGEPLPDH) the chain is on the extracellular side. An N-linked (GlcNAc...) asparagine glycan is attached at Asn-47. Residues 62 to 82 (LVLLMWSLIVSLYPLGGLFGA) form a helical membrane-spanning segment. Residues 83 to 97 (LLAGPLAITLGRKKS) are Cytoplasmic-facing. The helical transmembrane segment at 98-118 (LLVNNIFVVSAAILFGFSRKA) threads the bilayer. Over 119 to 128 (GSFEMIMLGR) the chain is Extracellular. A helical transmembrane segment spans residues 129–149 (LLVGVNAGVSMNIQPMYLGES). The Cytoplasmic portion of the chain corresponds to 150–157 (APKELRGA). The chain crosses the membrane as a helical span at residues 158 to 178 (VAMSSAIFTALGIVMGQVVGL). The Extracellular segment spans residues 179–187 (RELLGGPQA). The chain crosses the membrane as a helical span at residues 188-208 (WPLLLASCLVPGALQLASLPL). Over 209–273 (LPESPRYLLI…LFQHRALRRQ (65 aa)) the chain is Cytoplasmic. A helical transmembrane segment spans residues 274–294 (VTSLVVLGSAMELCGNDSVYA). Over 295-311 (YASSVFRKAGVPEAKIQ) the chain is Extracellular. A helical membrane pass occupies residues 312–332 (YAIIGTGSCELLTAVVSCVVI). Topologically, residues 333-338 (ERVGRR) are cytoplasmic. The chain crosses the membrane as a helical span at residues 339-359 (VLLIGGYSLMTCWGSIFTVAL). Residues 360 to 364 (CLQSS) are Extracellular-facing. A helical transmembrane segment spans residues 365-385 (FPWTLYLAMACIFAFILSFGI). Over 386–408 (GPAGVTGILATELFDQMARPAAC) the chain is Cytoplasmic. A helical transmembrane segment spans residues 409-429 (MVCGALMWIMLILVGLGFPFI). Over 430–435 (MEALSH) the chain is Extracellular. A helical membrane pass occupies residues 436 to 456 (FLYVPFLGVCVCGAIYTGLFL). Residues 457-496 (PETKGKTFQEISKELHRLNFPRRAQGPTWRSLEVIQSTEL) are Cytoplasmic-facing.

Belongs to the major facilitator superfamily. Sugar transporter (TC 2.A.1.1) family. Glucose transporter subfamily. Expressed in heart and skeletal muscle.

It localises to the cell membrane. It catalyses the reaction D-glucose(out) = D-glucose(in). Functionally, facilitative glucose transporter. The sequence is that of Solute carrier family 2, facilitated glucose transporter member 11 from Homo sapiens (Human).